A 78-amino-acid polypeptide reads, in one-letter code: Protein DsvD (78 aa).

It to A.fulgidus DsrD.

Its function is as follows. May play an essential role in dissimilatory sulfite reduction. The sequence is that of Protein DsvD (dsvD) from Nitratidesulfovibrio vulgaris (strain ATCC 29579 / DSM 644 / CCUG 34227 / NCIMB 8303 / VKM B-1760 / Hildenborough) (Desulfovibrio vulgaris).